A 529-amino-acid polypeptide reads, in one-letter code: Chromosomal replication initiator protein DnaA (529 aa).

Residues M1–T72 form a domain I, interacts with DnaA modulators region. The interval T72–S192 is domain II. Residues R193–S409 form a domain III, AAA+ region region. ATP is bound by residues G237, G239, K240, and T241. Positions N410–G529 are domain IV, binds dsDNA.

Belongs to the DnaA family. In terms of assembly, oligomerizes as a right-handed, spiral filament on DNA at oriC.

It is found in the cytoplasm. Its function is as follows. Plays an essential role in the initiation and regulation of chromosomal replication. ATP-DnaA binds to the origin of replication (oriC) to initiate formation of the DNA replication initiation complex once per cell cycle. Binds the DnaA box (a 9 base pair repeat at the origin) and separates the double-stranded (ds)DNA. Forms a right-handed helical filament on oriC DNA; dsDNA binds to the exterior of the filament while single-stranded (ss)DNA is stabiized in the filament's interior. The ATP-DnaA-oriC complex binds and stabilizes one strand of the AT-rich DNA unwinding element (DUE), permitting loading of DNA polymerase. After initiation quickly degrades to an ADP-DnaA complex that is not apt for DNA replication. Binds acidic phospholipids. This is Chromosomal replication initiator protein DnaA from Ralstonia pickettii (strain 12J).